The primary structure comprises 255 residues: Large ribosomal subunit protein uL4 (255 aa).

The protein belongs to the universal ribosomal protein uL4 family. As to quaternary structure, part of the 50S ribosomal subunit.

Its function is as follows. One of the primary rRNA binding proteins, this protein initially binds near the 5'-end of the 23S rRNA. It is important during the early stages of 50S assembly. It makes multiple contacts with different domains of the 23S rRNA in the assembled 50S subunit and ribosome. In terms of biological role, forms part of the polypeptide exit tunnel. The protein is Large ribosomal subunit protein uL4 of Thermoplasma volcanium (strain ATCC 51530 / DSM 4299 / JCM 9571 / NBRC 15438 / GSS1).